We begin with the raw amino-acid sequence, 105 residues long: MICOS complex subunit Mic10 (105 aa).

The helical transmembrane segment at 29 to 46 (LLKVTGGVAIGIVASVAF) threads the bilayer. Topologically, residues 47 to 105 (FKSRSWPIWFGSGVGLGTGWSNCRHDFASPYVLHGKRVPAGQDSQGKPAYNIITEQHKQ) are mitochondrial intermembrane. The segment at 85–105 (PAGQDSQGKPAYNIITEQHKQ) is disordered.

Belongs to the MICOS complex subunit Mic10 family. Component of the mitochondrial contact site and cristae organizing system (MICOS) complex.

The protein resides in the mitochondrion inner membrane. Functionally, component of the MICOS complex, a large protein complex of the mitochondrial inner membrane that plays crucial roles in the maintenance of crista junctions, inner membrane architecture, and formation of contact sites to the outer membrane. This Caenorhabditis elegans protein is MICOS complex subunit Mic10.